Here is an 885-residue protein sequence, read N- to C-terminus: Alanine--tRNA ligase (885 aa).

His-572, His-576, Cys-675, and His-679 together coordinate Zn(2+).

The protein belongs to the class-II aminoacyl-tRNA synthetase family. Requires Zn(2+) as cofactor.

It localises to the cytoplasm. The enzyme catalyses tRNA(Ala) + L-alanine + ATP = L-alanyl-tRNA(Ala) + AMP + diphosphate. Its function is as follows. Catalyzes the attachment of alanine to tRNA(Ala) in a two-step reaction: alanine is first activated by ATP to form Ala-AMP and then transferred to the acceptor end of tRNA(Ala). Also edits incorrectly charged Ser-tRNA(Ala) and Gly-tRNA(Ala) via its editing domain. This Leifsonia xyli subsp. xyli (strain CTCB07) protein is Alanine--tRNA ligase.